The primary structure comprises 258 residues: Indole-3-glycerol phosphate synthase (258 aa).

It belongs to the TrpC family.

The catalysed reaction is 1-(2-carboxyphenylamino)-1-deoxy-D-ribulose 5-phosphate + H(+) = (1S,2R)-1-C-(indol-3-yl)glycerol 3-phosphate + CO2 + H2O. It participates in amino-acid biosynthesis; L-tryptophan biosynthesis; L-tryptophan from chorismate: step 4/5. The polypeptide is Indole-3-glycerol phosphate synthase (Geobacillus thermodenitrificans (strain NG80-2)).